Here is a 224-residue protein sequence, read N- to C-terminus: Zinc finger C4H2 domain-containing protein (224 aa).

The stretch at 12-97 (ENIKEIRNKT…NKLLESTRRL (86 aa)) forms a coiled coil. Disordered stretches follow at residues 166-185 (QAAR…QPPP) and 204-224 (PLCK…KPDE). The C4H2-type zinc-finger motif lies at 189-206 (CLSCHQQIHRNAPICPLC). Over residues 208–224 (AKSRSRNPKKPKRKPDE) the composition is skewed to basic residues.

The protein resides in the nucleus. It is found in the cytoplasm. It localises to the postsynaptic cell membrane. Plays a role in GABAergic and V2 interneurons differentiation. Involved in motoneuron development and in neuromuscular junction formation. In Danio rerio (Zebrafish), this protein is Zinc finger C4H2 domain-containing protein (zc4h2).